The primary structure comprises 397 residues: Ubiquitin-like modifier-activating enzyme 5 (397 aa).

Residues Gly76, Asp97, Lys120, Asn143, and Asn177 each contribute to the ATP site. Zn(2+) contacts are provided by Cys219 and Cys222. Cys243 functions as the Glycyl thioester intermediate in the catalytic mechanism. Zn(2+) is bound by residues Cys296 and Cys301. The tract at residues Leu362–Asp384 is disordered. A compositionally biased stretch (low complexity) spans Thr375–Asp384.

It belongs to the ubiquitin-activating E1 family. UBA5 subfamily.

Its function is as follows. E1-like enzyme which activates UFM1. The polypeptide is Ubiquitin-like modifier-activating enzyme 5 (Aedes aegypti (Yellowfever mosquito)).